The sequence spans 466 residues: 3-isopropylmalate dehydratase large subunit (466 aa).

[4Fe-4S] cluster-binding residues include Cys-347, Cys-407, and Cys-410.

Belongs to the aconitase/IPM isomerase family. LeuC type 1 subfamily. In terms of assembly, heterodimer of LeuC and LeuD. [4Fe-4S] cluster serves as cofactor.

It carries out the reaction (2R,3S)-3-isopropylmalate = (2S)-2-isopropylmalate. Its pathway is amino-acid biosynthesis; L-leucine biosynthesis; L-leucine from 3-methyl-2-oxobutanoate: step 2/4. Catalyzes the isomerization between 2-isopropylmalate and 3-isopropylmalate, via the formation of 2-isopropylmaleate. This is 3-isopropylmalate dehydratase large subunit from Cronobacter sakazakii (strain ATCC BAA-894) (Enterobacter sakazakii).